The primary structure comprises 63 residues: Lantibiotic mutacin-1140 (63 aa).

Residues 1–41 (MSNTQLLEVLGTETFDVQEDLFAFDTTDTTIVASNDDPDTR) constitute a propeptide that is removed on maturation. The segment at residues 44-48 (SWSLC) is a cross-link (lanthionine (Ser-Cys)). A 2,3-didehydroalanine (Ser) modification is found at Ser46. Positions 49-52 (TPGC) form a cross-link, beta-methyllanthionine (Thr-Cys). 2,3-didehydrobutyrine is present on Thr55. The lanthionine (Ser-Cys) cross-link spans 57–62 (SFNSYC). A cross-link (S-(2-aminovinyl)-D-cysteine (Ser-Cys)) is located at residues 60 to 63 (SYCC).

This sequence belongs to the type A lantibiotic family. Maturation of lantibiotics involves the enzymatic conversion of Thr, and Ser into dehydrated AA and the formation of thioether bonds with cysteine. The C-terminal lanthionine undergoes decarboxylation. This is followed by membrane translocation and cleavage of the modified precursor. Post-translationally, the structure of the 2,3-didehydrobutyrine is not discussed in PubMed:11082191.

Lanthionine-containing peptide antibiotic (lantibiotic) active on Gram-positive bacteria. The bactericidal activity of lantibiotics is based on depolarization of energized bacterial cytoplasmic membranes, initiated by the formation of aqueous transmembrane pores. The sequence is that of Lantibiotic mutacin-1140 (lanA) from Streptococcus mutans.